Consider the following 1032-residue polypeptide: Caspase recruitment domain-containing protein 10 (1032 aa).

Disordered regions lie at residues 1–23, 253–276, and 481–553; these read MPGRAEAGEAEEEAGAGSGSEAE, RARGPPPGAEEKEKEKEKEKEPDN, and EFPS…MSDI. Serine 18 carries the phosphoserine modification. The CARD domain occupies 23–115; that stretch reads EEDALWERIE…EHFTLLTGQE (93 aa). The stretch at 138–456 forms a coiled coil; the sequence is TEVRRLREAR…LEVQLQRAQG (319 aa). Basic and acidic residues-rich tracts occupy residues 261-276 and 504-517; these read AEEKEKEKEKEKEPDN and HNSEEATDSEKEIN.

In terms of assembly, CARD10 and BCL10 bind to each other by CARD-CARD interaction. They both participate in a complex with MALT1, where MALT1 binds to BCL10. Interacts with TMEM43; this interaction is essential for EGFR-mediated NF-kappa-B activation. In terms of tissue distribution, detected in adult heart, kidney and liver; lower levels in intestine, placenta, muscle and lung. Also found in fetal lung, liver and kidney.

It is found in the cytoplasm. Its function is as follows. Scaffold protein that plays an important role in mediating the activation of NF-kappa-B via BCL10 or EGFR. The sequence is that of Caspase recruitment domain-containing protein 10 (CARD10) from Homo sapiens (Human).